A 266-amino-acid chain; its full sequence is Energy-coupling factor transporter transmembrane protein EcfT 1 (266 aa).

A run of 5 helical transmembrane segments spans residues 33–53, 73–93, 107–127, 152–172, and 243–263; these read IGIL…LFTL, LIWL…GGTI, LLNG…STVI, VPVN…PTLM, and HFGD…LVIL.

Belongs to the energy-coupling factor EcfT family. Forms a stable energy-coupling factor (ECF) transporter complex composed of 2 membrane-embedded substrate-binding proteins (S component), 2 ATP-binding proteins (A component) and 2 transmembrane proteins (T component). May be able to interact with more than 1 S component at a time.

It localises to the cell membrane. Its function is as follows. Transmembrane (T) component of an energy-coupling factor (ECF) ABC-transporter complex. Unlike classic ABC transporters this ECF transporter provides the energy necessary to transport a number of different substrates. This Listeria monocytogenes serotype 1/2a (strain 08-5578) protein is Energy-coupling factor transporter transmembrane protein EcfT 1.